The chain runs to 167 residues: Photosystem I assembly protein Ycf3 (167 aa).

3 TPR repeats span residues 35-68, 72-105, and 120-153; these read AFTY…EIDP, SYIL…NPSL, and GEQA…APSN.

It belongs to the Ycf3 family.

Its subcellular location is the plastid. It localises to the chloroplast thylakoid membrane. Essential for the assembly of the photosystem I (PSI) complex. May act as a chaperone-like factor to guide the assembly of the PSI subunits. In Marchantia polymorpha (Common liverwort), this protein is Photosystem I assembly protein Ycf3.